We begin with the raw amino-acid sequence, 90 residues long: Small ribosomal subunit protein uS15 (90 aa).

The protein belongs to the universal ribosomal protein uS15 family. In terms of assembly, part of the 30S ribosomal subunit. Forms a bridge to the 50S subunit in the 70S ribosome, contacting the 23S rRNA.

Its function is as follows. One of the primary rRNA binding proteins, it binds directly to 16S rRNA where it helps nucleate assembly of the platform of the 30S subunit by binding and bridging several RNA helices of the 16S rRNA. In terms of biological role, forms an intersubunit bridge (bridge B4) with the 23S rRNA of the 50S subunit in the ribosome. The polypeptide is Small ribosomal subunit protein uS15 (Wolbachia sp. subsp. Drosophila simulans (strain wRi)).